The chain runs to 775 residues: uncharacterized protein (775 aa).

Helical transmembrane passes span 16–36 (KLLI…GVFL), 585–605 (PYIL…VFPL), 625–645 (VMML…LLGI), 655–675 (FYVF…FLAT), and 742–762 (GVLI…FTML).

To L.lactis phage infection protein (PIP).

The protein localises to the cell membrane. This is an uncharacterized protein from Bacillus subtilis (strain 168).